The primary structure comprises 495 residues: Ankyrin repeat domain-containing protein 34A (495 aa).

ANK repeat units follow at residues 4-33, 37-72, 76-106, and 110-139; these read TEGHALLRAVGQGKLRLARLLLEGGAYVNE, QGETALMAACRARYDDPQNKARMVRYLLEQGADPNI, LGRTALMHACAGGGGAAVASLLLAHGADPSV, and AGASALVHALDRGDRETLATLLDACKAKGT. Position 15 is an N5-methylglutamine (Gln-15). 2 stretches are compositionally biased toward polar residues: residues 147–162 and 180–191; these read DTSPSGTKKTRQYLNS and VCTSPSEVQLQT. The segment at 147 to 495 is disordered; that stretch reads DTSPSGTKKT…SLGGPGEPGR (349 aa). Basic and acidic residues predominate over residues 203–213; that stretch reads AQEEEEKRDVF. Positions 223 to 232 are enriched in pro residues; the sequence is DPSPSEPLPK. Over residues 233–242 the composition is skewed to basic residues; sequence PPRHPPKPLK. Thr-315 is subject to Phosphothreonine. The segment covering 375 to 385 has biased composition (polar residues); the sequence is SVSSPRQSQES. A compositionally biased stretch (basic residues) spans 462 to 472; that stretch reads RTKRKLVRRHS. Gly residues predominate over residues 485-495; sequence QSLGGPGEPGR.

It belongs to the ANKRD34 family. In terms of processing, methylated at Gln-15 by N6AMT1.

This is Ankyrin repeat domain-containing protein 34A (Ankrd34a) from Rattus norvegicus (Rat).